The chain runs to 391 residues: Chalcone synthase (391 aa).

The active site involves Cys-164.

It belongs to the thiolase-like superfamily. Chalcone/stilbene synthases family.

The catalysed reaction is (E)-4-coumaroyl-CoA + 3 malonyl-CoA + 3 H(+) = 2',4,4',6'-tetrahydroxychalcone + 3 CO2 + 4 CoA. It functions in the pathway secondary metabolite biosynthesis; flavonoid biosynthesis. In terms of biological role, the primary product of this enzyme is 4,2',4',6'-tetrahydroxychalcone (also termed naringenin-chalcone or chalcone) which can under specific conditions spontaneously isomerize into naringenin. In Dianthus monspessulanus, this protein is Chalcone synthase (CHS).